The chain runs to 153 residues: Transcriptional repressor NrdR 3 (153 aa).

The tract at residues 1 to 26 (MRCPFCGHDDTQVKDSRPTEDNSAIR) is disordered. A zinc finger spans residues 3 to 34 (CPFCGHDDTQVKDSRPTEDNSAIRRRRSCPEC). The span at 7 to 24 (GHDDTQVKDSRPTEDNSA) shows a compositional bias: basic and acidic residues. Positions 49–139 (LVVIKKDGGR…VYRNFREAKD (91 aa)) constitute an ATP-cone domain.

Belongs to the NrdR family. It depends on Zn(2+) as a cofactor.

In terms of biological role, negatively regulates transcription of bacterial ribonucleotide reductase nrd genes and operons by binding to NrdR-boxes. This Paramagnetospirillum magneticum (strain ATCC 700264 / AMB-1) (Magnetospirillum magneticum) protein is Transcriptional repressor NrdR 3.